The chain runs to 436 residues: Histidinol dehydrogenase (436 aa).

NAD(+)-binding residues include Tyr-130, Gln-191, and Asn-214. Residues Ser-237, Gln-259, and His-262 each coordinate substrate. Residues Gln-259 and His-262 each contribute to the Zn(2+) site. Active-site proton acceptor residues include Glu-327 and His-328. Positions 328, 361, 415, and 420 each coordinate substrate. Asp-361 is a binding site for Zn(2+). A Zn(2+)-binding site is contributed by His-420.

It belongs to the histidinol dehydrogenase family. Zn(2+) serves as cofactor.

It carries out the reaction L-histidinol + 2 NAD(+) + H2O = L-histidine + 2 NADH + 3 H(+). Its pathway is amino-acid biosynthesis; L-histidine biosynthesis; L-histidine from 5-phospho-alpha-D-ribose 1-diphosphate: step 9/9. Catalyzes the sequential NAD-dependent oxidations of L-histidinol to L-histidinaldehyde and then to L-histidine. This Geobacter metallireducens (strain ATCC 53774 / DSM 7210 / GS-15) protein is Histidinol dehydrogenase.